We begin with the raw amino-acid sequence, 130 residues long: S-adenosylmethionine decarboxylase proenzyme (130 aa).

The active-site Schiff-base intermediate with substrate; via pyruvic acid is the S64. S64 is subject to Pyruvic acid (Ser); by autocatalysis. H69 functions as the Proton acceptor; for processing activity in the catalytic mechanism. C84 serves as the catalytic Proton donor; for catalytic activity.

This sequence belongs to the prokaryotic AdoMetDC family. Type 1 subfamily. Heterotetramer of two alpha and two beta chains arranged as a dimer of alpha/beta heterodimers. Requires pyruvate as cofactor. In terms of processing, is synthesized initially as an inactive proenzyme. Formation of the active enzyme involves a self-maturation process in which the active site pyruvoyl group is generated from an internal serine residue via an autocatalytic post-translational modification. Two non-identical subunits are generated from the proenzyme in this reaction, and the pyruvate is formed at the N-terminus of the alpha chain, which is derived from the carboxyl end of the proenzyme. The post-translation cleavage follows an unusual pathway, termed non-hydrolytic serinolysis, in which the side chain hydroxyl group of the serine supplies its oxygen atom to form the C-terminus of the beta chain, while the remainder of the serine residue undergoes an oxidative deamination to produce ammonia and the pyruvoyl group blocking the N-terminus of the alpha chain.

It catalyses the reaction S-adenosyl-L-methionine + H(+) = S-adenosyl 3-(methylsulfanyl)propylamine + CO2. Its pathway is amine and polyamine biosynthesis; S-adenosylmethioninamine biosynthesis; S-adenosylmethioninamine from S-adenosyl-L-methionine: step 1/1. Its function is as follows. Catalyzes the decarboxylation of S-adenosylmethionine to S-adenosylmethioninamine (dcAdoMet), the propylamine donor required for the synthesis of the polyamines spermine and spermidine from the diamine putrescine. In Thermoplasma volcanium (strain ATCC 51530 / DSM 4299 / JCM 9571 / NBRC 15438 / GSS1), this protein is S-adenosylmethionine decarboxylase proenzyme.